A 131-amino-acid polypeptide reads, in one-letter code: ATP synthase epsilon chain, chloroplastic (131 aa).

Belongs to the ATPase epsilon chain family. In terms of assembly, F-type ATPases have 2 components, CF(1) - the catalytic core - and CF(0) - the membrane proton channel. CF(1) has five subunits: alpha(3), beta(3), gamma(1), delta(1), epsilon(1). CF(0) has three main subunits: a, b and c.

It is found in the plastid. The protein localises to the chloroplast thylakoid membrane. Its function is as follows. Produces ATP from ADP in the presence of a proton gradient across the membrane. In Cyanidioschyzon merolae (strain NIES-3377 / 10D) (Unicellular red alga), this protein is ATP synthase epsilon chain, chloroplastic.